A 300-amino-acid polypeptide reads, in one-letter code: MKRGHDYSSSDSELDENIEVEKESADENGNLSSAAGSMSPSTSSQILARKRRRGIIEKRRRDRINNSLSELRRLVPSAFEKQGSAKLEKAEILQMTVDHLKMLHTAGGKGYFDAHALAMDYRSLGFRECLAEVARYLSIIEGMDTTDPLRVRLVSHLNNYASQREAANTAHTGIGHIPWGGTFAHHPHLSHPLLLAQTAHTSANSTSSSTEAHHQNRLPGSPHAETSSLRVPPNGNIASVLPVVASSKLSPPLLSSMASLSAFPFSFGSFHLLSPNSLSPTTPTPSGKPYRPWGTEIGAF.

Residues 1–52 (MKRGHDYSSSDSELDENIEVEKESADENGNLSSAAGSMSPSTSSQILARKRR) are disordered. Low complexity predominate over residues 32–44 (SSAAGSMSPSTSS). In terms of domain architecture, bHLH spans 48-103 (ARKRRRGIIEKRRRDRINNSLSELRRLVPSAFEKQGSAKLEKAEILQMTVDHLKML). Positions 121 to 157 (YRSLGFRECLAEVARYLSIIEGMDTTDPLRVRLVSHL) constitute an Orange domain. Over residues 199 to 210 (AHTSANSTSSST) the composition is skewed to low complexity. 2 disordered regions span residues 199–232 (AHTSANSTSSSTEAHHQNRLPGSPHAETSSLRVP) and 278–300 (LSPTTPTPSGKPYRPWGTEIGAF). The short motif at 290 to 293 (YRPW) is the YRPW motif element.

This sequence belongs to the HEY family. In terms of assembly, efficient DNA binding requires dimerization with another bHLH protein. Binds DNA in the form of homodimer or more strongly as a heterodimer with hes1/hairy1 or hes4/hairy2b. Also weakly interacts with the bHLH proteins hes2, neurod1 and neurod4/ath3. Interacts (via Orange domain) with ccdc89/boip (via C-terminus).

It localises to the nucleus. Its function is as follows. Downstream effector of Notch signaling. Transcriptional repressor which binds preferentially to the canonical E box sequence 5'-CACGTG-3'. Acts as a suppressor of neurogenesis by antagonizing proneural gene function. Functions during floorplate development. Plays a role in pronephros formation in the inhibition of distal tubule and duct cell fates and the promotion of glomus and proximal tubule formation. The sequence is that of Hairy/enhancer-of-split related with YRPW motif protein 1 (hey1) from Xenopus tropicalis (Western clawed frog).